Reading from the N-terminus, the 284-residue chain is Citrate lyase subunit beta-like protein (284 aa).

Substrate contacts are provided by R74 and E129. Mg(2+)-binding residues include E129 and D155.

It belongs to the HpcH/HpaI aldolase family. Citrate lyase beta subunit-like subfamily. Homotrimer. Mg(2+) is required as a cofactor.

In terms of biological role, may play a role in fatty acid biosynthesis. This is Citrate lyase subunit beta-like protein from Deinococcus radiodurans (strain ATCC 13939 / DSM 20539 / JCM 16871 / CCUG 27074 / LMG 4051 / NBRC 15346 / NCIMB 9279 / VKM B-1422 / R1).